The following is an 82-amino-acid chain: Conotoxin Cal30 (82 aa).

The first 19 residues, 1–19 (MEKLIILLLVASLLVTTDS), serve as a signal peptide directing secretion.

May contain 5 disulfide bonds. As to expression, expressed by the venom duct.

It localises to the secreted. Its function is as follows. Probable neurotoxin. This Californiconus californicus (California cone) protein is Conotoxin Cal30.